The chain runs to 171 residues: Myosin regulatory light polypeptide 9 (171 aa).

Over residues 1-15 (MSSKRAKAKTTKKRP) the composition is skewed to basic residues. Residues 1-21 (MSSKRAKAKTTKKRPQSATSN) are disordered. Position 2 is an N-acetylserine (serine 2). Phosphothreonine; by MLCK, CIT and ROCK2 is present on threonine 19. Serine 20 carries the phosphoserine; by CDC42BP, CIT, MLCK, PAK1, ROCK1, ROCK2, DAPK1, DAPK2 and ZIPK/DAPK3 modification. EF-hand domains follow at residues 29–64 (SQIQ…LGKN) and 98–133 (DPED…MGDR). The Ca(2+) site is built by aspartate 42, asparagine 44, aspartate 46, and aspartate 53.

Myosin is a hexamer of 2 heavy chains and 4 light chains: interacts with myosin heavy chain MYO19. Interacts with LUZP1; the interaction results in inhibition of phosphorylation of MYL9 by DAPK3. In terms of processing, phosphorylation increases the actin-activated myosin ATPase activity and thereby regulates the contractile activity. It is required to generate the driving force in the migration of the cells but not necessary for localization of myosin-2 at the leading edge. Phosphorylation is required for myotube formation. Phosphorylated by DAPK3; DAPK3-mediated phosphorylation is inhibited by LUZP1. As to expression, smooth muscle tissues and in some, but not all, nonmuscle cells.

The protein resides in the cytoplasm. It is found in the cytoskeleton. Its subcellular location is the cell cortex. Its function is as follows. Myosin regulatory subunit that plays an important role in regulation of both smooth muscle and nonmuscle cell contractile activity via its phosphorylation. Implicated in cytokinesis, receptor capping, and cell locomotion. In myoblasts, may regulate PIEZO1-dependent cortical actomyosin assembly involved in myotube formation. This chain is Myosin regulatory light polypeptide 9 (Myl9), found in Rattus norvegicus (Rat).